Reading from the N-terminus, the 607-residue chain is ATP-dependent RNA helicase dbp9 (607 aa).

Positions valine 24–serine 52 match the Q motif motif. Residues isoleucine 55–leucine 232 form the Helicase ATP-binding domain. Alanine 68–threonine 75 contacts ATP. Positions aspartate 180–aspartate 183 match the DEAD box motif. In terms of domain architecture, Helicase C-terminal spans glycine 243 to lysine 475. Residues valine 332 to aspartate 343 show a composition bias toward basic and acidic residues. 2 disordered regions span residues valine 332–aspartate 380 and threonine 573–lysine 607. Residues alanine 344–lysine 356 are compositionally biased toward acidic residues. The segment covering glutamate 357–glutamine 368 has biased composition (basic and acidic residues). Residues arginine 578 to glycine 592 show a composition bias toward basic residues.

Belongs to the DEAD box helicase family. DDX56/DBP9 subfamily.

It localises to the nucleus. Its subcellular location is the nucleolus. The enzyme catalyses ATP + H2O = ADP + phosphate + H(+). Its function is as follows. ATP-binding RNA helicase involved in the biogenesis of 60S ribosomal subunits and is required for the normal formation of 25S and 5.8S rRNAs. This is ATP-dependent RNA helicase dbp9 (dbp9) from Botryotinia fuckeliana (strain B05.10) (Noble rot fungus).